The sequence spans 268 residues: Formamidopyrimidine-DNA glycosylase (268 aa).

Pro-2 serves as the catalytic Schiff-base intermediate with DNA. Glu-3 serves as the catalytic Proton donor. Lys-56 serves as the catalytic Proton donor; for beta-elimination activity. DNA contacts are provided by His-91, Arg-110, and Arg-149. An FPG-type zinc finger spans residues 234-268; that stretch reads QVYGRFNQACPNCGQPLKRSRIGGRSSHYCEKCQQ. Catalysis depends on Arg-258, which acts as the Proton donor; for delta-elimination activity.

It belongs to the FPG family. Monomer. Zn(2+) serves as cofactor.

The catalysed reaction is Hydrolysis of DNA containing ring-opened 7-methylguanine residues, releasing 2,6-diamino-4-hydroxy-5-(N-methyl)formamidopyrimidine.. It catalyses the reaction 2'-deoxyribonucleotide-(2'-deoxyribose 5'-phosphate)-2'-deoxyribonucleotide-DNA = a 3'-end 2'-deoxyribonucleotide-(2,3-dehydro-2,3-deoxyribose 5'-phosphate)-DNA + a 5'-end 5'-phospho-2'-deoxyribonucleoside-DNA + H(+). Functionally, involved in base excision repair of DNA damaged by oxidation or by mutagenic agents. Acts as a DNA glycosylase that recognizes and removes damaged bases. Has a preference for oxidized purines, such as 7,8-dihydro-8-oxoguanine (8-oxoG). Has AP (apurinic/apyrimidinic) lyase activity and introduces nicks in the DNA strand. Cleaves the DNA backbone by beta-delta elimination to generate a single-strand break at the site of the removed base with both 3'- and 5'-phosphates. This chain is Formamidopyrimidine-DNA glycosylase, found in Syntrophomonas wolfei subsp. wolfei (strain DSM 2245B / Goettingen).